A 177-amino-acid polypeptide reads, in one-letter code: Photosystem I assembly protein Ycf4 (177 aa).

Helical transmembrane passes span 20-40 (VALL…SSYF) and 60-80 (LVMG…WAVI).

The protein belongs to the Ycf4 family.

The protein localises to the cellular thylakoid membrane. Its function is as follows. Seems to be required for the assembly of the photosystem I complex. This is Photosystem I assembly protein Ycf4 from Synechococcus sp. (strain RCC307).